Here is a 104-residue protein sequence, read N- to C-terminus: Pyrimidine/purine nucleoside phosphorylase (104 aa).

The protein belongs to the nucleoside phosphorylase PpnP family.

It carries out the reaction a purine D-ribonucleoside + phosphate = a purine nucleobase + alpha-D-ribose 1-phosphate. The catalysed reaction is adenosine + phosphate = alpha-D-ribose 1-phosphate + adenine. The enzyme catalyses cytidine + phosphate = cytosine + alpha-D-ribose 1-phosphate. It catalyses the reaction guanosine + phosphate = alpha-D-ribose 1-phosphate + guanine. It carries out the reaction inosine + phosphate = alpha-D-ribose 1-phosphate + hypoxanthine. The catalysed reaction is thymidine + phosphate = 2-deoxy-alpha-D-ribose 1-phosphate + thymine. The enzyme catalyses uridine + phosphate = alpha-D-ribose 1-phosphate + uracil. It catalyses the reaction xanthosine + phosphate = alpha-D-ribose 1-phosphate + xanthine. In terms of biological role, catalyzes the phosphorolysis of diverse nucleosides, yielding D-ribose 1-phosphate and the respective free bases. Can use uridine, adenosine, guanosine, cytidine, thymidine, inosine and xanthosine as substrates. Also catalyzes the reverse reactions. The chain is Pyrimidine/purine nucleoside phosphorylase from Pelobacter propionicus (strain DSM 2379 / NBRC 103807 / OttBd1).